The following is a 324-amino-acid chain: Adducin-related protein C1289.14 (324 aa).

Belongs to the aldolase class II family. Adducin subfamily.

This is Adducin-related protein C1289.14 from Schizosaccharomyces pombe (strain 972 / ATCC 24843) (Fission yeast).